A 658-amino-acid chain; its full sequence is Glycogen debranching enzyme (658 aa).

D336 serves as the catalytic Nucleophile. The Proton donor role is filled by E371.

It belongs to the glycosyl hydrolase 13 family.

It catalyses the reaction Hydrolysis of (1-&gt;6)-alpha-D-glucosidic linkages to branches with degrees of polymerization of three or four glucose residues in limit dextrin.. It functions in the pathway glycan degradation; glycogen degradation. Functionally, removes maltotriose and maltotetraose chains that are attached by 1,6-alpha-linkage to the limit dextrin main chain, generating a debranched limit dextrin. The chain is Glycogen debranching enzyme from Klebsiella pneumoniae (strain 342).